The sequence spans 454 residues: MNFLGKKVLVVGAGKSGISAIELLSQEGAQTILYDANEEINKEEISKKLPIDYKGDIILGGLSSELKSELDVVVLSPGVPTDLDYVKELKSAEIPIIGEVELAYNFSKGKIAAITGTNGKTSTTTLVGEIMKTYYKSVFVVGNIGVPYTQMVKNTENDSVTVAEMSSFQLETIETFRPDVSAILNITPDHLNRHHTMEAYIEAKVNITKNQTKEDTCILNYEDSYLRTVSGRIPATILWFSSVRELERGLFLRENHIIYRDDEKECVVCDVNELQIIGKHNYENVMAAVGIAIALKVPMDFIREAVTKFRGVEHRIEYVTTKRGVKYYNDSKGTNPDASIQAIKAMQTKTLLIGGGYDKDSDYDDWIKAFDDKVTYLVLLGQTREKIANAAKRLGVKNIVLVDSLSEAVDFCAEHAGVGETVLLSPCCASWGMFKDYEERGMLFKEYVHALKDE.

ATP is bound at residue 116–122 (GTNGKTS).

This sequence belongs to the MurCDEF family.

Its subcellular location is the cytoplasm. It carries out the reaction UDP-N-acetyl-alpha-D-muramoyl-L-alanine + D-glutamate + ATP = UDP-N-acetyl-alpha-D-muramoyl-L-alanyl-D-glutamate + ADP + phosphate + H(+). Its pathway is cell wall biogenesis; peptidoglycan biosynthesis. Functionally, cell wall formation. Catalyzes the addition of glutamate to the nucleotide precursor UDP-N-acetylmuramoyl-L-alanine (UMA). This is UDP-N-acetylmuramoylalanine--D-glutamate ligase from Lachnoclostridium phytofermentans (strain ATCC 700394 / DSM 18823 / ISDg) (Clostridium phytofermentans).